The following is a 176-amino-acid chain: Isopentenyl-diphosphate Delta-isomerase (176 aa).

2 residues coordinate Mn(2+): His-22 and His-28. The 135-residue stretch at 26–160 (LRHKAVSVFV…PERYTPWLRI (135 aa)) folds into the Nudix hydrolase domain. Cys-62 is a catalytic residue. Residue His-64 coordinates Mn(2+). Glu-82 lines the Mg(2+) pocket. Mn(2+)-binding residues include Glu-108 and Glu-110. Glu-110 is a catalytic residue.

The protein belongs to the IPP isomerase type 1 family. It depends on Mg(2+) as a cofactor. The cofactor is Mn(2+).

Its subcellular location is the cytoplasm. The catalysed reaction is isopentenyl diphosphate = dimethylallyl diphosphate. It participates in isoprenoid biosynthesis; dimethylallyl diphosphate biosynthesis; dimethylallyl diphosphate from isopentenyl diphosphate: step 1/1. It functions in the pathway porphyrin-containing compound metabolism; chlorophyll biosynthesis. Catalyzes the 1,3-allylic rearrangement of the homoallylic substrate isopentenyl (IPP) to its highly electrophilic allylic isomer, dimethylallyl diphosphate (DMAPP). The sequence is that of Isopentenyl-diphosphate Delta-isomerase from Dinoroseobacter shibae (strain DSM 16493 / NCIMB 14021 / DFL 12).